Here is a 358-residue protein sequence, read N- to C-terminus: Purine permease 2 (358 aa).

The next 10 helical transmembrane spans lie at 6 to 26 (VLVI…PLMM), 37 to 57 (IWFP…PLLL), 74 to 94 (FFLM…LVGF), 110 to 130 (TASL…FFMV), 134 to 154 (FTPF…VLAL), 170 to 190 (VVGF…LPLV), 209 to 229 (FQMV…LAAG), 262 to 282 (VIVF…GLIF), 288 to 308 (VSGI…VICF), and 312 to 332 (FQAG…SYFY). The EamA domain maps to 46 to 154 (VGCPLIFFPL…LTGGAVVLAL (109 aa)).

This sequence belongs to the purine permeases (TC 2.A.7.14) family. Expressed in the vascular system of leaves. Restricted to the phloem. Expressed in flowers and roots and not detected in stems.

It is found in the membrane. Competitive inhibition of adenine transport by isopentenyladenine, kinetin, benzylaminopurine, trans- and cis-zeatin and trans-zeatin riboside. Mediates adenine transport. May be involved in the uptake of cytokinin analogs. In Arabidopsis thaliana (Mouse-ear cress), this protein is Purine permease 2 (PUP2).